The chain runs to 234 residues: MSILNDFSHLSSEGPKLTARQQQILELIQSAITRTGAPPTRAEIANELGFKSANAAEEHLQALARKGVIELVSGTSRGIRLRSDTLRSIHESRVKQFSLPLQSLAQLALPLVGRVAAGSPILAQEHIEQTYYFESSLFQRQPDYLLKVRGMSMRDAGIIDGDLLAVKQAKEARNGQIVVARIGDEVTVKRFRRTKHLIELLPENPDFKTIVVEPGEPFELEGLAVGLIRNTMLI.

Residues R41–Q61 constitute a DNA-binding region (H-T-H motif). Catalysis depends on for autocatalytic cleavage activity residues S152 and K189.

Belongs to the peptidase S24 family. In terms of assembly, homodimer.

The catalysed reaction is Hydrolysis of Ala-|-Gly bond in repressor LexA.. Its function is as follows. Represses a number of genes involved in the response to DNA damage (SOS response), including recA and lexA. In the presence of single-stranded DNA, RecA interacts with LexA causing an autocatalytic cleavage which disrupts the DNA-binding part of LexA, leading to derepression of the SOS regulon and eventually DNA repair. This chain is LexA repressor, found in Polaromonas sp. (strain JS666 / ATCC BAA-500).